Consider the following 554-residue polypeptide: Intraflagellar transport protein 56 (554 aa).

Residues 1–24 form a disordered region; sequence MMLSRAKPAVGRGVQHTDKRKKKG. TPR repeat units follow at residues 57-90, 92-125, 151-184, and 468-501; these read EDTN…ENCN, EVWV…LQNR, TEDQ…NREY, and ANDC…EGKR.

The protein belongs to the IFT56 family. As to quaternary structure, component of the IFT complex B. Interacts with IFT46; the interaction is direct.

It localises to the cell projection. The protein localises to the cilium. Functionally, component of the intraflagellar transport (IFT) complex B required for transport of proteins in the motile cilium. Required for transport of specific ciliary cargo proteins related to motility, while it is neither required for IFT complex B assembly or motion nor for cilium assembly. Required for efficient coupling between the accumulation of GLI2 and GLI3 at the ciliary tips and their dissociation from the negative regulator SUFU. Plays a key role in maintaining the integrity of the IFT complex B and the proper ciliary localization of the IFT complex B components. Not required for IFT complex A ciliary localization or function. Essential for maintaining proper microtubule organization within the ciliary axoneme. In Homo sapiens (Human), this protein is Intraflagellar transport protein 56.